The chain runs to 333 residues: Phosphate acetyltransferase (333 aa).

This sequence belongs to the phosphate acetyltransferase and butyryltransferase family.

The protein localises to the cytoplasm. The catalysed reaction is acetyl-CoA + phosphate = acetyl phosphate + CoA. It participates in metabolic intermediate biosynthesis; acetyl-CoA biosynthesis; acetyl-CoA from acetate: step 2/2. The polypeptide is Phosphate acetyltransferase (pta) (Clostridium acetobutylicum (strain ATCC 824 / DSM 792 / JCM 1419 / IAM 19013 / LMG 5710 / NBRC 13948 / NRRL B-527 / VKM B-1787 / 2291 / W)).